Consider the following 708-residue polypeptide: Wall-associated receptor kinase-like 14 (708 aa).

A signal peptide spans 1-42 (MLRSIFDFNQRSTKMVMISHKLDLILVFIIVIGGSIFRRVSA). Residues Asn-43, Asn-88, Asn-101, Asn-131, Asn-158, Asn-167, and Asn-184 are each glycosylated (N-linked (GlcNAc...) asparagine). Over 43–285 (NFTVPCNGRC…WRHCRSNLIT (243 aa)) the chain is Extracellular. The helical transmembrane segment at 286–306 (IVGGTVGGAFLLAALAFFFFC) threads the bilayer. Residues 307–708 (KRRRSTPLRS…TNTLLGNIPR (402 aa)) lie on the Cytoplasmic side of the membrane. The Protein kinase domain maps to 348 to 629 (FSEKQKLGIG…LEQIRLSGWI (282 aa)). ATP contacts are provided by residues 354-362 (LGIGAYGTV) and Lys-376. Catalysis depends on Asp-472, which acts as the Proton acceptor. Disordered regions lie at residues 636 to 659 (SPAG…SIGS) and 686 to 708 (VQDP…NIPR). A compositionally biased stretch (basic and acidic residues) spans 643–652 (SSDRGSERSV). Positions 692–708 (SAQSSPSTNTLLGNIPR) are enriched in polar residues.

The protein belongs to the protein kinase superfamily. Ser/Thr protein kinase family.

The protein localises to the membrane. The enzyme catalyses L-seryl-[protein] + ATP = O-phospho-L-seryl-[protein] + ADP + H(+). It catalyses the reaction L-threonyl-[protein] + ATP = O-phospho-L-threonyl-[protein] + ADP + H(+). Serine/threonine-protein kinase that may function as a signaling receptor of extracellular matrix component. The sequence is that of Wall-associated receptor kinase-like 14 (WAKL14) from Arabidopsis thaliana (Mouse-ear cress).